Consider the following 129-residue polypeptide: Histone H2B.1 (129 aa).

Residues 1–17 (MSAEKKPASKAPAEKKP) are compositionally biased toward basic and acidic residues. The tract at residues 1 to 35 (MSAEKKPASKAPAEKKPAAKKTAPSADGKKRTKAR) is disordered. An N6-acetyllysine; alternate mark is found at Lys-5 and Lys-6. Glycyl lysine isopeptide (Lys-Gly) (interchain with G-Cter in SUMO); alternate cross-links involve residues Lys-5 and Lys-6. The residue at position 9 (Ser-9) is a Phosphoserine. Lys-10 bears the N6-acetyllysine mark. N6-acetyllysine; alternate is present on Lys-15. Lys-15 participates in a covalent cross-link: Glycyl lysine isopeptide (Lys-Gly) (interchain with G-Cter in SUMO); alternate. Lys-16 participates in a covalent cross-link: Glycyl lysine isopeptide (Lys-Gly) (interchain with G-Cter in SUMO). Residue Lys-122 forms a Glycyl lysine isopeptide (Lys-Gly) (interchain with G-Cter in ubiquitin) linkage.

Belongs to the histone H2B family. The nucleosome is a histone octamer containing two molecules each of H2A, H2B, H3 and H4 assembled in one H3-H4 heterotetramer and two H2A-H2B heterodimers. The octamer wraps approximately 147 bp of DNA. In terms of processing, monoubiquitinated by the UBC2-BRE1 complex to form H2BK123ub1. H2BK123ub1 gives a specific tag for epigenetic transcriptional activation and is also prerequisite for H3K4me and H3K79me formation. H2BK123ub1 also modulates the formation of double-strand breaks during meiosis and is a prerequisite for DNA-damage checkpoint activation. Post-translationally, phosphorylated by STE20 to form H2BS10ph during progression through meiotic prophase. May be correlated with chromosome condensation. Acetylated by GCN5 to form H2BK11ac and H2BK16ac. H2BK16ac can also be formed by ESA1. Acetylation of N-terminal lysines and particularly formation of H2BK11acK16ac has a positive effect on transcription. In terms of processing, sumoylation to form H2BK6su or H2BK7su, and probably also H2BK16su or H2BK17su, occurs preferentially near the telomeres and represses gene transcription.

The protein localises to the nucleus. It is found in the chromosome. Core component of nucleosome. Nucleosomes wrap and compact DNA into chromatin, limiting DNA accessibility to the cellular machineries which require DNA as a template. Histones thereby play a central role in transcription regulation, DNA repair, DNA replication and chromosomal stability. DNA accessibility is regulated via a complex set of post-translational modifications of histones, also called histone code, and nucleosome remodeling. This chain is Histone H2B.1 (HTB1), found in Candida glabrata (strain ATCC 2001 / BCRC 20586 / JCM 3761 / NBRC 0622 / NRRL Y-65 / CBS 138) (Yeast).